We begin with the raw amino-acid sequence, 308 residues long: tRNA dimethylallyltransferase (308 aa).

Gly14–Thr21 provides a ligand contact to ATP. A substrate-binding site is contributed by Thr16–Thr21. Interaction with substrate tRNA regions lie at residues Asp39–Leu42, Gln163–Arg167, and Arg244–Arg249.

The protein belongs to the IPP transferase family. Monomer. Requires Mg(2+) as cofactor.

The enzyme catalyses adenosine(37) in tRNA + dimethylallyl diphosphate = N(6)-dimethylallyladenosine(37) in tRNA + diphosphate. Functionally, catalyzes the transfer of a dimethylallyl group onto the adenine at position 37 in tRNAs that read codons beginning with uridine, leading to the formation of N6-(dimethylallyl)adenosine (i(6)A). The chain is tRNA dimethylallyltransferase from Shewanella loihica (strain ATCC BAA-1088 / PV-4).